Here is a 145-residue protein sequence, read N- to C-terminus: Small ribosomal subunit protein uS12 (145 aa).

Position 64 is a hydroxyproline (proline 64).

It belongs to the universal ribosomal protein uS12 family.

The protein is Small ribosomal subunit protein uS12 (rps23) of Aspergillus fumigatus (strain ATCC MYA-4609 / CBS 101355 / FGSC A1100 / Af293) (Neosartorya fumigata).